Reading from the N-terminus, the 150-residue chain is Cytochrome c oxidase subunit 5A, mitochondrial (150 aa).

The transit peptide at 1–41 directs the protein to the mitochondrion; it reads MLGAALRRCAVAATTWAGPRGLLHSARTPGPAAAIQSVRCY. The SIFI-degron motif lies at 2-20; that stretch reads LGAALRRCAVAATTWAGPR. An N6-acetyllysine mark is found at lysine 87 and lysine 113. Threonine 141 is subject to Phosphothreonine.

It belongs to the cytochrome c oxidase subunit 5A family. Component of the cytochrome c oxidase (complex IV, CIV), a multisubunit enzyme composed of 14 subunits. The complex is composed of a catalytic core of 3 subunits MT-CO1, MT-CO2 and MT-CO3, encoded in the mitochondrial DNA, and 11 supernumerary subunits COX4I, COX5A, COX5B, COX6A, COX6B, COX6C, COX7A, COX7B, COX7C, COX8 and NDUFA4, which are encoded in the nuclear genome. The complex exists as a monomer or a dimer and forms supercomplexes (SCs) in the inner mitochondrial membrane with NADH-ubiquinone oxidoreductase (complex I, CI) and ubiquinol-cytochrome c oxidoreductase (cytochrome b-c1 complex, complex III, CIII), resulting in different assemblies (supercomplex SCI(1)III(2)IV(1) and megacomplex MCI(2)III(2)IV(2)). Interacts with AFG1L. Interacts with RAB5IF. Post-translationally, in response to mitochondrial stress, the precursor protein is ubiquitinated by the SIFI complex in the cytoplasm before mitochondrial import, leading to its degradation. Within the SIFI complex, UBR4 initiates ubiquitin chain that are further elongated or branched by KCMF1.

Its subcellular location is the mitochondrion inner membrane. The protein operates within energy metabolism; oxidative phosphorylation. Functionally, component of the cytochrome c oxidase, the last enzyme in the mitochondrial electron transport chain which drives oxidative phosphorylation. The respiratory chain contains 3 multisubunit complexes succinate dehydrogenase (complex II, CII), ubiquinol-cytochrome c oxidoreductase (cytochrome b-c1 complex, complex III, CIII) and cytochrome c oxidase (complex IV, CIV), that cooperate to transfer electrons derived from NADH and succinate to molecular oxygen, creating an electrochemical gradient over the inner membrane that drives transmembrane transport and the ATP synthase. Cytochrome c oxidase is the component of the respiratory chain that catalyzes the reduction of oxygen to water. Electrons originating from reduced cytochrome c in the intermembrane space (IMS) are transferred via the dinuclear copper A center (CU(A)) of subunit 2 and heme A of subunit 1 to the active site in subunit 1, a binuclear center (BNC) formed by heme A3 and copper B (CU(B)). The BNC reduces molecular oxygen to 2 water molecules using 4 electrons from cytochrome c in the IMS and 4 protons from the mitochondrial matrix. In Macaca mulatta (Rhesus macaque), this protein is Cytochrome c oxidase subunit 5A, mitochondrial (COX5A).